The primary structure comprises 283 residues: Cyclin-C (283 aa).

The Cyclin N-terminal domain maps to 46–144 (NVIQALGEHL…ILECEFYLLE (99 aa)). Residues 252 to 283 (TILNKMPKPKPPPNSEGEQGTNGSQSSGYSQS) form a disordered region. Polar residues predominate over residues 267–283 (EGEQGTNGSQSSGYSQS).

Belongs to the cyclin family. Cyclin C subfamily. In terms of assembly, component of the Mediator complex. The cylin/CDK pair formed by ccnc/cdk8 also associates with the large subunit of RNA polymerase II.

The protein localises to the nucleus. Component of the Mediator complex, a coactivator involved in regulated gene transcription of nearly all RNA polymerase II-dependent genes. Mediator functions as a bridge to convey information from gene-specific regulatory proteins to the basal RNA polymerase II transcription machinery. Mediator is recruited to promoters by direct interactions with regulatory proteins and serves as a scaffold for the assembly of a functional preinitiation complex with RNA polymerase II and the general transcription factors. Binds to and activates cyclin-dependent kinase cdk8 that phosphorylates the CTD (C-terminal domain) of the large subunit of RNA polymerase II (RNAp II), which may inhibit the formation of a transcription initiation complex. The protein is Cyclin-C (ccnc) of Xenopus tropicalis (Western clawed frog).